Reading from the N-terminus, the 448-residue chain is Dual specificity mitogen-activated protein kinase kinase 5 (448 aa).

The tract at residues 18–25 (VIRIKIPN) is interaction with MAPK7. Residues 18–109 (VIRIKIPNSG…EPLQIFPRAC (92 aa)) enclose the PB1 domain. The interaction with MAP3K2/MAP3K3 stretch occupies residues 64-68 (DEDGD). Residues 116–144 (NIHGLKVNTRAGPSQHSSPAVSDSLPSNS) form a disordered region. The interval 117–131 (IHGLKVNTRAGPSQH) is interaction with MAPK7. The segment covering 126–144 (AGPSQHSSPAVSDSLPSNS) has biased composition (polar residues). Positions 166–409 (IRYRDTLGHG…MRKQPKERPA (244 aa)) constitute a Protein kinase domain. Residues 172–180 (LGHGNGGTV) and Lys195 each bind ATP. The active-site Proton acceptor is Asp283. At Ser311 the chain carries Phosphoserine. A Phosphothreonine modification is found at Thr315.

This sequence belongs to the protein kinase superfamily. STE Ser/Thr protein kinase family. MAP kinase kinase subfamily. Interacts with PARD6A, MAP3K3 and MAPK7. Forms a complex with SQSTM1 and PRKCZ or PRKCI. In terms of assembly, (Microbial infection) Interacts with Yersinia YopJ. Requires Mg(2+) as cofactor. Post-translationally, activated by phosphorylation on Ser/Thr by MAP kinase kinase kinases. In terms of processing, (Microbial infection) Yersinia YopJ may acetylate Ser/Thr residues, preventing phosphorylation and activation, thus blocking the MAPK signaling pathway. Expressed in many adult tissues. Abundant in heart and skeletal muscle.

The catalysed reaction is L-seryl-[protein] + ATP = O-phospho-L-seryl-[protein] + ADP + H(+). The enzyme catalyses L-threonyl-[protein] + ATP = O-phospho-L-threonyl-[protein] + ADP + H(+). It catalyses the reaction L-tyrosyl-[protein] + ATP = O-phospho-L-tyrosyl-[protein] + ADP + H(+). Functionally, acts as a scaffold for the formation of a ternary MAP3K2/MAP3K3-MAP3K5-MAPK7 signaling complex. Activation of this pathway appears to play a critical role in protecting cells from stress-induced apoptosis, neuronal survival and cardiac development and angiogenesis. As part of the MAPK/ERK signaling pathway, acts as a negative regulator of apoptosis in cardiomyocytes via promotion of STUB1/CHIP-mediated ubiquitination and degradation of ICER-type isoforms of CREM. The protein is Dual specificity mitogen-activated protein kinase kinase 5 (MAP2K5) of Homo sapiens (Human).